Here is a 223-residue protein sequence, read N- to C-terminus: Endonuclease NucS (223 aa).

This sequence belongs to the NucS endonuclease family.

It localises to the cytoplasm. Cleaves both 3' and 5' ssDNA extremities of branched DNA structures. This Streptomyces coelicolor (strain ATCC BAA-471 / A3(2) / M145) protein is Endonuclease NucS.